A 645-amino-acid polypeptide reads, in one-letter code: UPF0313 protein CLK_3381 (645 aa).

Positions 295-566 (AIKEVKFSIT…RMQRALLQFS (272 aa)) constitute a Radical SAM core domain. [4Fe-4S] cluster is bound by residues cysteine 309, cysteine 313, and cysteine 316. Positions 598-645 (NKPYKKSHKKNNVKNNNNHYNKNNNYNKNKDVSKKNKKNSLSKHKKRK) are disordered. Basic residues predominate over residues 600 to 609 (PYKKSHKKNN). Residues 610–624 (VKNNNNHYNKNNNYN) show a composition bias toward low complexity. Residues 632–645 (KNKKNSLSKHKKRK) show a composition bias toward basic residues.

The protein belongs to the UPF0313 family. The cofactor is [4Fe-4S] cluster.

The sequence is that of UPF0313 protein CLK_3381 from Clostridium botulinum (strain Loch Maree / Type A3).